Consider the following 284-residue polypeptide: NAD(P)H-hydrate epimerase (284 aa).

The N-terminal 55 residues, 1–55 (MSGLRTLLGLGLLVSSSRFPRVVARGGPRCPGPAWWAARPMHLGDSTMAGGTVKY), are a transit peptide targeting the mitochondrion. A YjeF N-terminal domain is found at 61 to 271 (AQAVDEELFN…DLEKKYQLNL (211 aa)). 115-119 (NNGGD) serves as a coordination point for (6S)-NADPHX. N116 is a K(+) binding site. K140 carries the post-translational modification N6-succinyllysine. Position 181 (D181) interacts with K(+). (6S)-NADPHX contacts are provided by residues 185–191 (GFSFKGA) and D214. K(+) is bound at residue S217.

The protein belongs to the NnrE/AIBP family. Homodimer. Interacts with APOA1 and APOA2. K(+) serves as cofactor. Post-translationally, undergoes physiological phosphorylation during sperm capacitation, downstream to PKA activation.

It localises to the mitochondrion. The protein resides in the secreted. The enzyme catalyses (6R)-NADHX = (6S)-NADHX. It catalyses the reaction (6R)-NADPHX = (6S)-NADPHX. Catalyzes the epimerization of the S- and R-forms of NAD(P)HX, a damaged form of NAD(P)H that is a result of enzymatic or heat-dependent hydration. This is a prerequisite for the S-specific NAD(P)H-hydrate dehydratase to allow the repair of both epimers of NAD(P)HX. Accelerates cholesterol efflux from endothelial cells to high-density lipoprotein (HDL) and thereby regulates angiogenesis. The sequence is that of NAD(P)H-hydrate epimerase from Monodelphis domestica (Gray short-tailed opossum).